The following is a 670-amino-acid chain: Solute carrier organic anion transporter family member 1A6 (670 aa).

The Cytoplasmic portion of the chain corresponds to 1–20 (MGEPEKRAGTHGIRCFAKIK). The helical transmembrane segment at 21 to 40 (VFLLALTWAYASKALSATYM) threads the bilayer. Topologically, residues 41–59 (NSMLTQIERRFNISTSIVG) are extracellular. The N-linked (GlcNAc...) asparagine glycan is linked to Asn-52. Residues 60–80 (LINGSFEVGNLLLIIFVSYFG) form a helical membrane-spanning segment. Residues 81 to 86 (RKRHRP) are Cytoplasmic-facing. Residues 87–111 (IMIGIGCAVMGLGCFIISLPHFLMG) form a helical membrane-spanning segment. At 112–155 (RYEYETTISPTSNLSSNSFLCMENRTQTLKPTQDPAECVKEMKS) the chain is on the extracellular side. Residues Asn-124 and Asn-135 are each glycosylated (N-linked (GlcNAc...) asparagine). The helical transmembrane segment at 156 to 184 (LMWIYVLVGNIIRGIGETPIMPLGISYIE) threads the bilayer. The Cytoplasmic segment spans residues 185-203 (DFAKSENSPFYIGILEVGK). Residues 204 to 224 (ITGPIAAIWLGSFCATIYVDM) form a helical membrane-spanning segment. Residues 225-242 (GSVNTDDLTITPTDTRCV) are Extracellular-facing. The helical transmembrane segment at 243–267 (GAWWIGFLVCAGLNILISIPFFFFP) threads the bilayer. Topologically, residues 268–311 (KTFPKEGPEDMANETKNDEGDKHREKAKEEKRGITKDFFLFMKS) are cytoplasmic. A disordered region spans residues 276–295 (EDMANETKNDEGDKHREKAK). The helical transmembrane segment at 312–333 (LSCNPIYMLCVLTSVLQVNGFV) threads the bilayer. The Extracellular portion of the chain corresponds to 334 to 353 (SIFTFKPKYLEHHYGKSSSE). A helical membrane pass occupies residues 354 to 377 (AIFLMGLYTLPSVCVGYLISGFIM). The Cytoplasmic segment spans residues 378-381 (KKFK). Residues 382–405 (ITLKKAAFISYCLGMSECLLSLCN) form a helical membrane-spanning segment. At 406–513 (FMLTCDNVPI…PDCANKLQYF (108 aa)) the chain is on the extracellular side. The 56-residue stretch at 433-488 (NTVLADCNTRCSCLTKTWDPVCGDNGLAYITPCLAGCEKSVGSGINMVLQDCSCIQ) folds into the Kazal-like domain. 3 cysteine pairs are disulfide-bonded: Cys-439-Cys-469, Cys-445-Cys-465, and Cys-454-Cys-486. Residue Asn-492 is glycosylated (N-linked (GlcNAc...) asparagine). Residues 514–536 (LIITVFCSFFYSLSLIPGYMIFL) traverse the membrane as a helical segment. The Cytoplasmic segment spans residues 537-545 (RCMKSEEKS). Residues 546–571 (LGIGLQAFCMRILGGILAPIYFGVLI) traverse the membrane as a helical segment. At 572–605 (DRTCLHWGTQKCGEPGACRTYEINSFRSIYLGLP) the chain is on the extracellular side. Residues 606-623 (AALRGSSYLPAFFILRLM) traverse the membrane as a helical segment. The Cytoplasmic portion of the chain corresponds to 624–670 (RKFQFPGDINSPVTDHVEMMLTEKESEHTDVHRSPQVENDGELKTKL). Ser-634 is subject to Phosphoserine. The interval 647-670 (KESEHTDVHRSPQVENDGELKTKL) is disordered.

The protein belongs to the organo anion transporter (TC 2.A.60) family.

The protein localises to the cell membrane. May mediate the Na(+)-independent transport of organic anions. The protein is Solute carrier organic anion transporter family member 1A6 (Slco1a6) of Rattus norvegicus (Rat).